The following is a 272-amino-acid chain: Troponin T, fast skeletal muscle (272 aa).

The span at 1–50 (MSDEETEQVEEQYEEEEEAQEEEVQEEAPEPEEVQEDAVAEEEREEDEEE) shows a compositional bias: acidic residues. Residues 1–75 (MSDEETEQVE…EKVDFDDIQK (75 aa)) form a disordered region. At Ser2 the chain carries N-acetylserine. Ser2 carries the phosphoserine modification. Positions 63–75 (PEGEKVDFDDIQK) are enriched in basic and acidic residues. Ser91 carries the phosphoserine modification. Residues 114–156 (RAERAEQQRIRAEKEREPQNRLAEEKARREEEDAKRRAEDDMK) are compositionally biased toward basic and acidic residues. A disordered region spans residues 114–193 (RAERAEQQRI…TAREMKKKIL (80 aa)). A phosphoserine mark is found at Ser162, Ser169, and Ser170. Residues 184-193 (TAREMKKKIL) show a composition bias toward basic and acidic residues. Ser206 is modified (phosphoserine). Tyr222 is modified (phosphotyrosine). Residues 248–272 (RIDQAQKHSKKAGATAKGKVGGRWK) are disordered.

It belongs to the troponin T family. As to expression, expressed predominantly in skeletal muscle.

In terms of biological role, troponin T is the tropomyosin-binding subunit of troponin, the thin filament regulatory complex which confers calcium-sensitivity to striated muscle actomyosin ATPase activity. The chain is Troponin T, fast skeletal muscle (Tnnt3) from Mus musculus (Mouse).